The sequence spans 599 residues: Aspartate--tRNA(Asp/Asn) ligase (599 aa).

Glutamate 172 is an L-aspartate binding site. The interval 196–199 (QLFK) is aspartate. Arginine 218 contacts L-aspartate. ATP-binding positions include 218–220 (RDE) and glutamine 227. An L-aspartate-binding site is contributed by histidine 451. An ATP-binding site is contributed by glutamate 485. An L-aspartate-binding site is contributed by arginine 492. 537–540 (GLDR) contacts ATP.

It belongs to the class-II aminoacyl-tRNA synthetase family. Type 1 subfamily. In terms of assembly, homodimer.

Its subcellular location is the cytoplasm. The catalysed reaction is tRNA(Asx) + L-aspartate + ATP = L-aspartyl-tRNA(Asx) + AMP + diphosphate. Aspartyl-tRNA synthetase with relaxed tRNA specificity since it is able to aspartylate not only its cognate tRNA(Asp) but also tRNA(Asn). Reaction proceeds in two steps: L-aspartate is first activated by ATP to form Asp-AMP and then transferred to the acceptor end of tRNA(Asp/Asn). This is Aspartate--tRNA(Asp/Asn) ligase from Aromatoleum aromaticum (strain DSM 19018 / LMG 30748 / EbN1) (Azoarcus sp. (strain EbN1)).